Here is a 1578-residue protein sequence, read N- to C-terminus: FERM and PDZ domain-containing protein 1 (1578 aa).

The region spanning 57–135 (TVKIDKDTLL…SLSITVVRCT (79 aa)) is the PDZ domain. The FERM domain maps to 181–496 (NVLKLYLENG…GYYRLLVDPV (316 aa)). Disordered stretches follow at residues 555–616 (KEEQ…EEDD), 720–743 (SDSS…QGWT), and 759–831 (PLAF…VKKY). Over residues 720–729 (SDSSESTASR) the composition is skewed to polar residues. Residues 730–742 (QGGAPPAWGQQGW) show a composition bias toward low complexity. The span at 793 to 811 (AEPSATSLQNKASTSSPEN) shows a compositional bias: polar residues. Basic residues predominate over residues 822–831 (PSRRGGVKKY). Residues 924-931 (EPETMETK) form an important for interaction with GPSM2 region. 3 disordered regions span residues 950 to 1030 (PNNK…LASN), 1070 to 1194 (KYTE…QGCQ), and 1347 to 1374 (PQPE…SAGS). The segment covering 968 to 986 (TPHCSNPGSSGPDTAQARP) has biased composition (polar residues). The segment covering 1100–1117 (TKEEPQGQLSLERDREVT) has biased composition (basic and acidic residues). Residues 1139-1150 (DVSNNVSQTLDI) show a composition bias toward polar residues.

Interacts with GPSM1. Interacts with GPSM2 (via TPR repeat region).

The protein resides in the cytoplasm. It localises to the cytosol. Its subcellular location is the cell membrane. Stabilizes membrane-bound GPSM1, and thereby promotes its interaction with GNAI1. This Homo sapiens (Human) protein is FERM and PDZ domain-containing protein 1 (FRMPD1).